Reading from the N-terminus, the 486-residue chain is Glycogen synthase 2 (486 aa).

Residue Lys-15 participates in ADP-alpha-D-glucose binding.

This sequence belongs to the glycosyltransferase 1 family. Bacterial/plant glycogen synthase subfamily.

The catalysed reaction is [(1-&gt;4)-alpha-D-glucosyl](n) + ADP-alpha-D-glucose = [(1-&gt;4)-alpha-D-glucosyl](n+1) + ADP + H(+). It functions in the pathway glycan biosynthesis; glycogen biosynthesis. Synthesizes alpha-1,4-glucan chains using ADP-glucose. The chain is Glycogen synthase 2 (glgA2) from Rhizobium meliloti (strain 1021) (Ensifer meliloti).